Reading from the N-terminus, the 322-residue chain is Phosphatidylserine decarboxylase proenzyme (322 aa).

Active-site charge relay system; for autoendoproteolytic cleavage activity residues include D90, H147, and S254. The Schiff-base intermediate with substrate; via pyruvic acid; for decarboxylase activity role is filled by S254. Residue S254 is modified to Pyruvic acid (Ser); by autocatalysis. Positions 290 to 322 (FVTPDSEPAPLPAEEIEAEHDASPLVDDKKDQV) are disordered. A compositionally biased stretch (basic and acidic residues) spans 308-322 (EHDASPLVDDKKDQV).

This sequence belongs to the phosphatidylserine decarboxylase family. PSD-B subfamily. Prokaryotic type I sub-subfamily. As to quaternary structure, heterodimer of a large membrane-associated beta subunit and a small pyruvoyl-containing alpha subunit. Requires pyruvate as cofactor. Post-translationally, is synthesized initially as an inactive proenzyme. Formation of the active enzyme involves a self-maturation process in which the active site pyruvoyl group is generated from an internal serine residue via an autocatalytic post-translational modification. Two non-identical subunits are generated from the proenzyme in this reaction, and the pyruvate is formed at the N-terminus of the alpha chain, which is derived from the carboxyl end of the proenzyme. The autoendoproteolytic cleavage occurs by a canonical serine protease mechanism, in which the side chain hydroxyl group of the serine supplies its oxygen atom to form the C-terminus of the beta chain, while the remainder of the serine residue undergoes an oxidative deamination to produce ammonia and the pyruvoyl prosthetic group on the alpha chain. During this reaction, the Ser that is part of the protease active site of the proenzyme becomes the pyruvoyl prosthetic group, which constitutes an essential element of the active site of the mature decarboxylase.

It is found in the cell membrane. It carries out the reaction a 1,2-diacyl-sn-glycero-3-phospho-L-serine + H(+) = a 1,2-diacyl-sn-glycero-3-phosphoethanolamine + CO2. The protein operates within phospholipid metabolism; phosphatidylethanolamine biosynthesis; phosphatidylethanolamine from CDP-diacylglycerol: step 2/2. Functionally, catalyzes the formation of phosphatidylethanolamine (PtdEtn) from phosphatidylserine (PtdSer). The polypeptide is Phosphatidylserine decarboxylase proenzyme (Escherichia fergusonii (strain ATCC 35469 / DSM 13698 / CCUG 18766 / IAM 14443 / JCM 21226 / LMG 7866 / NBRC 102419 / NCTC 12128 / CDC 0568-73)).